We begin with the raw amino-acid sequence, 311 residues long: MMSSDPPSLRFGQVVIGPPGSGKTTYCRGMQEFLSRLGRKVVIVNLDPANEGLPYPCAVDIAELVTLDDVMDGLKLGPNGGLIYSMEYLEANLDWLENKLKLHHDCYFLFDCPGQVELYTHHNSVKNIFAQLSKWNFRLTAVHLVDSHYCADPAKFISVLCTSLSTMLHVELPHVNVLSKMDLIEQYGKLAFNLDFYTEVLDLSYLVEHLSADPFFRNFNHLNVKLAEVIQDYSLVSFVPLNVQDKESMMQVLRTVDKANGYCFGDLEERNLQAMMSAAVGADFQFSTTLGVQEKYLDATKNHVEDEVMDL.

20-25 contacts GTP; sequence GSGKTT. Positions 77 to 79 match the Gly-Pro-Asn (GPN)-loop; involved in dimer interface motif; it reads GPN. 179 to 182 serves as a coordination point for GTP; the sequence is SKMD.

This sequence belongs to the GPN-loop GTPase family. Heterodimers with gpn1 or gpn3. Binds to RNA polymerase II (RNAPII).

Its function is as follows. Small GTPase required for proper localization of RNA polymerase II and III (RNAPII and RNAPIII). May act at an RNAP assembly step prior to nuclear import. This is GPN-loop GTPase 2 from Danio rerio (Zebrafish).